Here is an 80-residue protein sequence, read N- to C-terminus: Defensin-like protein CAL1 (80 aa).

The N-terminal stretch at 1 to 31 (MAPSRRMVASAFLLLAILVATEMGTTKVAEA) is a signal peptide. Intrachain disulfides connect Cys-34/Cys-80, Cys-45/Cys-65, Cys-51/Cys-74, and Cys-55/Cys-76.

It belongs to the DEFL family. As to expression, expressed preferentially in root exodermis and xylem parenchyma cells in vasculature of root and flag leaf sheath.

Its subcellular location is the secreted. The protein resides in the extracellular space. In terms of biological role, plant defensin-like protein involved in accumulation of cadmium (Cd) in rice leaves. Mediates Cd efflux from cytosol into extracellular spaces via chelation. This drives Cd secretion from xylem parenchyma cells into the xylem vessels, hence lowering Cd levels in cytosol meanwhile promoting Cd translocation from roots to shoots. This Oryza sativa subsp. japonica (Rice) protein is Defensin-like protein CAL1.